Here is a 383-residue protein sequence, read N- to C-terminus: 6-hydroxynicotinate 3-monooxygenase (383 aa).

The N-terminal stretch at 1-26 is a signal peptide; the sequence is MQGKPRIAVIGAGLGGTAGAALMARA. FAD contacts are provided by residues Gly15, 34–35, His47, Arg108, and Leu130; that span reads EQ. Catalysis depends on His47, which acts as the Proton acceptor. Tyr214 functions as the Proton acceptor in the catalytic mechanism. Residues Asp293 and 306 to 307 each bind FAD; that span reads AA.

The protein belongs to the 6-hydroxynicotinate 3-monooxygenase family. Monomer. Requires FAD as cofactor.

It catalyses the reaction 6-hydroxynicotinate + NADH + O2 + 2 H(+) = 2,5-dihydroxypyridine + CO2 + NAD(+) + H2O. The protein operates within cofactor degradation; nicotinate degradation. Its activity is regulated as follows. Competitively inhibited by 6-hydroxynicotinaldehyde. In terms of biological role, flavin-dependent monooxygenase (FMO) that catalyzes the decarboxylative hydroxylation of 6-hydroxynicotinic acid (6-HNA) to 2,5-dihydroxypyridine (2,5-DHP) with concomitant oxidation of NADH, a step in the aerobic nicotinate degradation pathway. Is also active on the non-natural substrate 5-chloro-6-hydroxynicotinate, and is much less efficient on the substrate analog 4-hydroxybenzoate. This chain is 6-hydroxynicotinate 3-monooxygenase, found in Bordetella bronchiseptica (strain ATCC BAA-588 / NCTC 13252 / RB50) (Alcaligenes bronchisepticus).